Consider the following 661-residue polypeptide: CD180 antigen (661 aa).

Residues 1–23 (MAFDVSCFFWVVLFSAGCKVITS) form the signal peptide. At 24 to 626 (WDQMCIEKEA…KLSDVKLSCG (603 aa)) the chain is on the extracellular side. One can recognise an LRRNT domain in the interval 33–53 (ANKTYNCENLGLSEIPDTLPN). N-linked (GlcNAc...) asparagine glycosylation is found at N34, N53, N70, and N78. 7 LRR repeats span residues 54–75 (TTEFLEFSFNFLPTIHNRTFSR), 78–99 (NLTFLDLTRCQINWIHEDTFQS), 102–123 (QLSTLVLTGNPLIFMAETSLNG), 126–147 (SLKHLFLIQTGISNLEFIPVHN), 150–171 (NLESLYLGSNHISSIKFPKDFP), 174–195 (NLKVLDFQNNAIHYISREDMRS), and 201–221 (NLSLNFNGNNVKGIELGAFDS). N-linked (GlcNAc...) asparagine glycosylation is found at N201, N234, and N244. LRR repeat units lie at residues 275–296 (SVESLNLQEHRFSDISSTTFQC), 299–320 (QLQELDLTATHLKGLPSGMKGL), 322–343 (LLKKLVLSVNHFDQLCQISAAN), 346–366 (SLTHLYIRGNVKKLHLGVGCL), and 371–391 (NLQTLDLSHNDIEASDCCSLQ). N394 and N402 each carry an N-linked (GlcNAc...) asparagine glycan. 7 LRR repeats span residues 397–418 (HLQTLNLSHNEPLGLQSQAFKE), 421–442 (QLELLDLAFTRLHINAPQSPFQ), 446–466 (FLQVLNLTYCFLDTSNQHLLA), 470–493 (VLRHLNLKGNHFQDGTITKTNLLQ), 497–518 (SLEVLILSSCGLLSIDQQAFHS), 521–544 (KMSHVDLSHNSLTCDSIDSLSHLK), and 546–564 (IYLNLAANSINIISPRLLP). N451 is a glycosylation site (N-linked (GlcNAc...) asparagine). The N-linked (GlcNAc...) asparagine glycan is linked to N573. Positions 577–627 (NPLDCTCSNIHFLTWYKENLHKLEGSEETTCANPPSLRGVKLSDVKLSCGI) constitute an LRRCT domain. A helical transmembrane segment spans residues 627-650 (ITAIGIFFLIVFLLLLAILLFFAV). At 651–661 (KYLLRWKYQHI) the chain is on the cytoplasmic side.

It belongs to the Toll-like receptor family. As to quaternary structure, M-shaped tetramer of two CD180-LY86 heterodimers. As to expression, expressed mainly on mature peripherical B cells. Detected in spleen, lymph node and appendix. Not detected in pre-B and -T cells.

It localises to the cell membrane. May cooperate with MD-1 and TLR4 to mediate the innate immune response to bacterial lipopolysaccharide (LPS) in B-cells. Leads to NF-kappa-B activation. Also involved in the life/death decision of B-cells. The polypeptide is CD180 antigen (CD180) (Homo sapiens (Human)).